The primary structure comprises 137 residues: MAVSKKLFVELVTPERELWAGEGDMVIAKTVEGEIGIQPGHVPVLALLAPGSVVRVLGARESGEVRAAVHGGFMSVTLSDRVSILAEIAELAEEIDVERARAALKSAEREALGDAEMRARVARARGRLRAAKAEEAA.

It belongs to the ATPase epsilon chain family. In terms of assembly, F-type ATPases have 2 components, CF(1) - the catalytic core - and CF(0) - the membrane proton channel. CF(1) has five subunits: alpha(3), beta(3), gamma(1), delta(1), epsilon(1). CF(0) has three main subunits: a, b and c.

The protein resides in the cell membrane. In terms of biological role, produces ATP from ADP in the presence of a proton gradient across the membrane. In Thermobifida fusca (strain YX), this protein is ATP synthase epsilon chain.